A 1761-amino-acid polypeptide reads, in one-letter code: Probable serine/threonine-protein kinase DDB_G0282963 (1761 aa).

12 disordered regions span residues 18–47 (PQQQ…QQQQ), 60–269 (QQQQ…SNKL), 322–458 (SISN…SDFN), 545–717 (QNSS…KSSQ), 749–783 (LKNS…TISQ), 798–830 (AFYN…STSA), 842–956 (TTQI…KSVF), 972–997 (NSHH…EVPT), 1081–1151 (ITSA…CNVN), 1179–1305 (KNNC…PSKQ), 1318–1343 (ALDS…GTPT), and 1355–1459 (QHSR…ECWK). Composition is skewed to low complexity over residues 19-47 (QQQQ…QQQQ), 60-85 (QQQQ…SNEI), 92-105 (NITN…IISL), and 112-237 (ALNS…NNNN). The span at 238–256 (KQMTPPTFKNNLQVKHQPQ) shows a compositional bias: polar residues. 4 stretches are compositionally biased toward low complexity: residues 257 to 269 (SSSG…SNKL), 322 to 341 (SISN…TNTT), 348 to 451 (GSIG…NNGV), and 546 to 572 (NSSL…NNNI). A compositionally biased stretch (polar residues) spans 573 to 582 (MAGSTSSVIY). Positions 591–627 (NENNNNNINNDNTVCNINNNNNSNNNKSNNSNNSNNS) are enriched in low complexity. The segment covering 633–643 (SSDEEPETDSD) has biased composition (acidic residues). Composition is skewed to low complexity over residues 674 to 697 (NNTN…NNNT), 759 to 778 (PILS…NNSN), 805 to 824 (NNNN…NNNN), 847 to 885 (TSDI…YNNY), 902 to 956 (TKMS…KSVF), 979 to 990 (SGNNSSNSNNNN), 1081 to 1149 (ITSA…CTCN), and 1180 to 1262 (NNCT…SNNN). Residues 1263–1273 (NHHHHHHHHHN) are compositionally biased toward basic residues. Composition is skewed to low complexity over residues 1288-1303 (SSSS…SSPS), 1320-1338 (DSTN…TSSN), 1359-1386 (NNSS…NNNN), and 1393-1454 (SNST…MNSN). Residues 1476 to 1744 (LFLIKKIGAG…AITSLYDDYI (269 aa)) form the Protein kinase domain. ATP-binding positions include 1482-1490 (IGAGSFSKV) and Lys1503. Catalysis depends on Asp1597, which acts as the Proton acceptor.

The protein belongs to the protein kinase superfamily. TKL Ser/Thr protein kinase family.

It catalyses the reaction L-seryl-[protein] + ATP = O-phospho-L-seryl-[protein] + ADP + H(+). The catalysed reaction is L-threonyl-[protein] + ATP = O-phospho-L-threonyl-[protein] + ADP + H(+). The chain is Probable serine/threonine-protein kinase DDB_G0282963 from Dictyostelium discoideum (Social amoeba).